The chain runs to 644 residues: Exoribonuclease 2 (644 aa).

One can recognise an RNB domain in the interval 189–516 (REDLTALDFV…NHRLLKAVIK (328 aa)). Residues 561-643 (DTRFAAEIVD…ETRSIIARPV (83 aa)) enclose the S1 motif domain.

Belongs to the RNR ribonuclease family. RNase II subfamily.

It is found in the cytoplasm. It catalyses the reaction Exonucleolytic cleavage in the 3'- to 5'-direction to yield nucleoside 5'-phosphates.. Involved in mRNA degradation. Hydrolyzes single-stranded polyribonucleotides processively in the 3' to 5' direction. This is Exoribonuclease 2 from Escherichia coli (strain UTI89 / UPEC).